A 109-amino-acid chain; its full sequence is MEQFECINVEEAHQKLHQQTAVLVDIRDPQSYAMGHTPGAFHLTNDTLGAFMRDHDFDTAVMVMCYHGNSSKGAAQYLLQQGFDKVYSVDGGFDAWHRHFPAEVAHGTF.

Residues 17-105 enclose the Rhodanese domain; it reads HQQTAVLVDI…WHRHFPAEVA (89 aa). Catalysis depends on Cys65, which acts as the Cysteine persulfide intermediate.

Belongs to the GlpE family.

The protein localises to the cytoplasm. The catalysed reaction is thiosulfate + hydrogen cyanide = thiocyanate + sulfite + 2 H(+). The enzyme catalyses thiosulfate + [thioredoxin]-dithiol = [thioredoxin]-disulfide + hydrogen sulfide + sulfite + 2 H(+). Functionally, transferase that catalyzes the transfer of sulfur from thiosulfate to thiophilic acceptors such as cyanide or dithiols. May function in a CysM-independent thiosulfate assimilation pathway by catalyzing the conversion of thiosulfate to sulfite, which can then be used for L-cysteine biosynthesis. The protein is Thiosulfate sulfurtransferase GlpE of Klebsiella pneumoniae (strain 342).